The following is a 331-amino-acid chain: Ketol-acid reductoisomerase (NADP(+)) (331 aa).

Residues 2–181 (TKVYYEDAVK…GATRAGVIET (180 aa)) form the KARI N-terminal Rossmann domain. NADP(+) contacts are provided by residues 25 to 28 (YGSQ), R48, S52, and 82 to 85 (DETQ). The active site involves H107. Residue G133 coordinates NADP(+). The KARI C-terminal knotted domain occupies 182-327 (TFKEETETDL…AELREMMPFV (146 aa)). Mg(2+) contacts are provided by D190, E194, E226, and E230. S251 contacts substrate.

The protein belongs to the ketol-acid reductoisomerase family. Requires Mg(2+) as cofactor.

It carries out the reaction (2R)-2,3-dihydroxy-3-methylbutanoate + NADP(+) = (2S)-2-acetolactate + NADPH + H(+). It catalyses the reaction (2R,3R)-2,3-dihydroxy-3-methylpentanoate + NADP(+) = (S)-2-ethyl-2-hydroxy-3-oxobutanoate + NADPH + H(+). It participates in amino-acid biosynthesis; L-isoleucine biosynthesis; L-isoleucine from 2-oxobutanoate: step 2/4. It functions in the pathway amino-acid biosynthesis; L-valine biosynthesis; L-valine from pyruvate: step 2/4. Its function is as follows. Involved in the biosynthesis of branched-chain amino acids (BCAA). Catalyzes an alkyl-migration followed by a ketol-acid reduction of (S)-2-acetolactate (S2AL) to yield (R)-2,3-dihydroxy-isovalerate. In the isomerase reaction, S2AL is rearranged via a Mg-dependent methyl migration to produce 3-hydroxy-3-methyl-2-ketobutyrate (HMKB). In the reductase reaction, this 2-ketoacid undergoes a metal-dependent reduction by NADPH to yield (R)-2,3-dihydroxy-isovalerate. In Listeria innocua serovar 6a (strain ATCC BAA-680 / CLIP 11262), this protein is Ketol-acid reductoisomerase (NADP(+)).